We begin with the raw amino-acid sequence, 281 residues long: Energy-coupling factor transporter ATP-binding protein EcfA1 (281 aa).

Residues 7 to 242 (ISVEDIVFRY…NKELVRIGLD (236 aa)) enclose the ABC transporter domain. 42-49 (GHNGSGKS) is a binding site for ATP. E168 (proton acceptor) is an active-site residue.

The protein belongs to the ABC transporter superfamily. Energy-coupling factor EcfA family. As to quaternary structure, forms a stable energy-coupling factor (ECF) transporter complex composed of 2 membrane-embedded substrate-binding proteins (S component), 2 ATP-binding proteins (A component) and 2 transmembrane proteins (T component).

It is found in the cell membrane. ATP-binding (A) component of a common energy-coupling factor (ECF) ABC-transporter complex. Unlike classic ABC transporters this ECF transporter provides the energy necessary to transport a number of different substrates. The chain is Energy-coupling factor transporter ATP-binding protein EcfA1 from Bacillus subtilis (strain 168).